A 442-amino-acid chain; its full sequence is Trigger factor (442 aa).

One can recognise a PPIase FKBP-type domain in the interval 163–248; that stretch reads NDLVTINYCI…ILNVEEKQEN (86 aa).

The protein belongs to the FKBP-type PPIase family. Tig subfamily.

Its subcellular location is the cytoplasm. It catalyses the reaction [protein]-peptidylproline (omega=180) = [protein]-peptidylproline (omega=0). Its function is as follows. Involved in protein export. Acts as a chaperone by maintaining the newly synthesized protein in an open conformation. Functions as a peptidyl-prolyl cis-trans isomerase. This is Trigger factor from Buchnera aphidicola subsp. Schizaphis graminum (strain Sg).